Here is a 139-residue protein sequence, read N- to C-terminus: Arsenate reductase (139 aa).

Catalysis depends on nucleophile residues C10, C82, and C89. 2 disulfides stabilise this stretch: C10-C82 and C82-C89.

Belongs to the low molecular weight phosphotyrosine protein phosphatase family. Thioredoxin-coupled ArsC subfamily.

Its subcellular location is the cytoplasm. The catalysed reaction is arsenate + [thioredoxin]-dithiol + H(+) = arsenite + [thioredoxin]-disulfide + H2O. In terms of biological role, catalyzes the reduction of arsenate [As(V)] to arsenite [As(III)]. The chain is Arsenate reductase from Oceanobacillus iheyensis (strain DSM 14371 / CIP 107618 / JCM 11309 / KCTC 3954 / HTE831).